Reading from the N-terminus, the 130-residue chain is MSATQNYGTGRRKTATARVFLRPGTGNISINNRSLDTFFGRETARMVVRQPLELTETVEKFDIYVTVIGGGVSGQAGAIRHGITRALMDYDETLRSALRKAGFVTRDAREVERKKVGLRKARKRPQYSKR.

Belongs to the universal ribosomal protein uS9 family.

The sequence is that of Small ribosomal subunit protein uS9 from Pseudomonas fluorescens (strain Pf0-1).